A 211-amino-acid polypeptide reads, in one-letter code: ATP-dependent Clp protease proteolytic subunit (211 aa).

The active-site Nucleophile is S106. H131 is a catalytic residue.

This sequence belongs to the peptidase S14 family. As to quaternary structure, fourteen ClpP subunits assemble into 2 heptameric rings which stack back to back to give a disk-like structure with a central cavity, resembling the structure of eukaryotic proteasomes.

Its subcellular location is the cytoplasm. It catalyses the reaction Hydrolysis of proteins to small peptides in the presence of ATP and magnesium. alpha-casein is the usual test substrate. In the absence of ATP, only oligopeptides shorter than five residues are hydrolyzed (such as succinyl-Leu-Tyr-|-NHMec, and Leu-Tyr-Leu-|-Tyr-Trp, in which cleavage of the -Tyr-|-Leu- and -Tyr-|-Trp bonds also occurs).. Functionally, cleaves peptides in various proteins in a process that requires ATP hydrolysis. Has a chymotrypsin-like activity. Plays a major role in the degradation of misfolded proteins. In Maricaulis maris (strain MCS10) (Caulobacter maris), this protein is ATP-dependent Clp protease proteolytic subunit.